The following is a 946-amino-acid chain: Inter-alpha-trypsin inhibitor heavy chain H2 (946 aa).

A signal peptide spans 1–18 (MKRLTCFFICFFLSEVSG). Positions 19–54 (FEIPINGLSEFVDYEDLVELAPGKFQLVAENRRYQR) are excised as a propeptide. One can recognise a VIT domain in the interval 56 to 185 (LPGESEEMME…KVQFELHYQE (130 aa)). Serine 60 is modified (phosphoserine; by FAM20C). The N-linked (GlcNAc...) (complex) asparagine glycan is linked to asparagine 118. Cysteine 261 and cysteine 264 form a disulfide bridge. 2 positions are modified to 4-carboxyglutamate: glutamate 282 and glutamate 283. A VWFA domain is found at 308–468 (PKNILFVIDV…YDFLKRLSNE (161 aa)). Asparagine 445 is a glycosylation site (N-linked (GlcNAc...) asparagine). Serine 466 is subject to Phosphoserine; by FAM20C. Residues cysteine 650 and cysteine 651 are joined by a disulfide bond. Residues 665–679 (STPSWANPSPTPVIS) form an O-glycosylated at three sites region. Threonine 666 is a glycosylation site (O-linked (GalNAc...) threonine; partial). O-linked (GalNAc...) serine glycosylation is present at serine 673. 2 O-linked (GalNAc...) threonine glycosylation sites follow: threonine 675 and threonine 691. Aspartate 702 bears the Aspartate 1-(chondroitin 4-sulfate)-ester mark. Residues 703–946 (PHFIIYLPKS…PQLYSFLKRP (244 aa)) constitute a propeptide that is removed on maturation. The residue at position 886 (serine 886) is a Phosphoserine; by FAM20C.

In terms of assembly, I-alpha-I plasma protease inhibitors are assembled from one or two heavy chains (HC) and one light chain, bikunin. Inter-alpha-inhibitor (I-alpha-I) is composed of ITIH1/HC1, ITIH2/HC2 and bikunin. Heavy chains are linked to bikunin via chondroitin 4-sulfate esterified to the alpha-carboxyl of the C-terminal aspartate after propeptide cleavage. In terms of processing, N- and O-glycosylated. O-glycosylated with core 1 or possibly core 8 glycans. Post-translationally, phosphorylated by FAM20C in the extracellular medium. Plasma.

It is found in the secreted. May act as a carrier of hyaluronan in serum or as a binding protein between hyaluronan and other matrix protein, including those on cell surfaces in tissues to regulate the localization, synthesis and degradation of hyaluronan which are essential to cells undergoing biological processes. This is Inter-alpha-trypsin inhibitor heavy chain H2 (ITIH2) from Homo sapiens (Human).